A 124-amino-acid polypeptide reads, in one-letter code: Outer dense fiber protein 2 (124 aa).

The stretch at Lys13–Leu124 forms a coiled coil.

Belongs to the ODF2 family. As to quaternary structure, self-associates. Associates with microtubules and forms a fibrillar structure partially linked to the microtubule network. Interacts through its C-terminus with PLK1. Interacts with ODF1. Interacts with MARK4; the interaction is required for localization of ODF2 to centrioles. Interacts with TSSK4. Interacts with AKNA. Interacts with QRICH2. Interacts with CFAP58. Interacts with BBOF1. Interacts with CCDC38. Interacts with CCDC42. Tyrosine phosphorylated. As to expression, detected in sperm flagella (at protein level).

Its subcellular location is the cytoplasm. The protein localises to the cytoskeleton. The protein resides in the microtubule organizing center. It is found in the centrosome. It localises to the cell projection. Its subcellular location is the cilium. The protein localises to the centriole. The protein resides in the spindle pole. It is found in the flagellum. Seems to be a major component of sperm tail outer dense fibers (ODF). ODFs are filamentous structures located on the outside of the axoneme in the midpiece and principal piece of the mammalian sperm tail and may help to maintain the passive elastic structures and elastic recoil of the sperm tail. May have a modulating influence on sperm motility. Functions as a general scaffold protein that is specifically localized at the distal/subdistal appendages of mother centrioles. Component of the centrosome matrix required for the localization of PLK1 and NIN to the centrosomes. Required for the formation and/or maintenance of normal CETN1 assembly. The sequence is that of Outer dense fiber protein 2 from Mesocricetus auratus (Golden hamster).